The sequence spans 327 residues: GMP reductase (327 aa).

The active-site Thioimidate intermediate is cysteine 176. 205-228 (IIADGGIRTHGDIAKSIRFGATMV) serves as a coordination point for NADP(+).

Belongs to the IMPDH/GMPR family. GuaC type 2 subfamily.

The enzyme catalyses IMP + NH4(+) + NADP(+) = GMP + NADPH + 2 H(+). In terms of biological role, catalyzes the irreversible NADPH-dependent deamination of GMP to IMP. It functions in the conversion of nucleobase, nucleoside and nucleotide derivatives of G to A nucleotides, and in maintaining the intracellular balance of A and G nucleotides. The polypeptide is GMP reductase (Streptococcus equi subsp. equi (strain 4047)).